A 105-amino-acid polypeptide reads, in one-letter code: Phosphoribosyl-ATP pyrophosphatase (105 aa).

This sequence belongs to the PRA-PH family.

It localises to the cytoplasm. The catalysed reaction is 1-(5-phospho-beta-D-ribosyl)-ATP + H2O = 1-(5-phospho-beta-D-ribosyl)-5'-AMP + diphosphate + H(+). It functions in the pathway amino-acid biosynthesis; L-histidine biosynthesis; L-histidine from 5-phospho-alpha-D-ribose 1-diphosphate: step 2/9. The chain is Phosphoribosyl-ATP pyrophosphatase from Methylococcus capsulatus (strain ATCC 33009 / NCIMB 11132 / Bath).